A 338-amino-acid chain; its full sequence is MTIRIAINGFGRIGRNVLRALYESGRRAEIKVVAINEPADAAGMAHLLKYDSTHGRFDWDVRQERDVLYVGDDAIRLLHQKEISQLPWGDLGVDIVLDCSGVYGKRADGEMHLASGAKKVLFSHPGSSDLDATVIYGVNHQQLQSEHRIVSSGSCTTNCIIPIIKLLDDAFSIESGTVTTIHASMNDQQVIDAYHPDLRRTRAASQSIIPVDTKLAAGITRIFPKFCDRFEAISVRVPTINVTAIDLSVTVTNAVSVLDVNTMLQRAAKGDFRSIVDYTELPLVSIDFNHDPHSAIVDGTQTRVSGKHLIKTLVWCDNEWGFANRMLDTTLMMARIGF.

12-13 serves as a coordination point for NAD(+); the sequence is RI. Substrate-binding positions include 154–156, Arg200, 213–214, and Arg236; these read SCT and TK. The Nucleophile role is filled by Cys155. NAD(+) is bound at residue Asn318.

It belongs to the glyceraldehyde-3-phosphate dehydrogenase family. Epd subfamily. Homotetramer.

It is found in the cytoplasm. The catalysed reaction is D-erythrose 4-phosphate + NAD(+) + H2O = 4-phospho-D-erythronate + NADH + 2 H(+). Its pathway is cofactor biosynthesis; pyridoxine 5'-phosphate biosynthesis; pyridoxine 5'-phosphate from D-erythrose 4-phosphate: step 1/5. In terms of biological role, catalyzes the NAD-dependent conversion of D-erythrose 4-phosphate to 4-phosphoerythronate. In Tolumonas auensis (strain DSM 9187 / NBRC 110442 / TA 4), this protein is D-erythrose-4-phosphate dehydrogenase.